A 967-amino-acid chain; its full sequence is Kinesin heavy chain (967 aa).

The 319-residue stretch at 8 to 326 (NIKVICRVRP…LLFGQRAKTI (319 aa)) folds into the Kinesin motor domain. 85–92 (GQTSSGKT) serves as a coordination point for ATP. The interval 173–314 (VSSPEEVMEV…PASYNESETK (142 aa)) is microtubule-binding. Disordered stretches follow at residues 387-411 (VPAE…NEGD) and 923-967 (KPIR…ESKA). The stretch at 392-861 (PATSTTSLAG…RDNADLRCEL (470 aa)) forms a coiled coil. The tract at residues 862–967 (PKLEKRLRAT…PIRMAPESKA (106 aa)) is globular. Residues 949–958 (QNGPMITSTP) show a composition bias toward polar residues.

It belongs to the TRAFAC class myosin-kinesin ATPase superfamily. Kinesin family. Kinesin subfamily. As to quaternary structure, oligomer composed of two heavy chains and two light chains. Interacts with amyloid-beta precursor-like protein (via cytoplasmic domain).

Its subcellular location is the cytoplasm. It localises to the cytoskeleton. The protein resides in the cell projection. It is found in the axon. Kinesin is a microtubule-associated force-producing protein that may play a role in organelle transport. The chain is Kinesin heavy chain from Doryteuthis pealeii (Longfin inshore squid).